A 199-amino-acid chain; its full sequence is MTNVYFLDIFMFVYVLQFLFYFKESMLGVLVNKFLGLLVVVFSYTDSLPLSSVISVFTFLVLLTCCFGGYFMYSFCPCGMIEFTFVYAMVAWLSTLLTFITSEKFSIYISKAGDSFLKTFSMLLVELVSEVSRPLALTVRLTVNVLVGHVISMMLYQLLELYLGIFYVWIVVLAIVMECFVFFIQSYIFSRLIYLYLNE.

The next 6 membrane-spanning stretches (helical) occupy residues 2–22 (TNVY…LFYF), 25–45 (SMLG…FSYT), 53–73 (VISV…YFMY), 80–100 (MIEF…LTFI), 143–163 (VNVL…ELYL), and 164–184 (GIFY…VFFI).

Belongs to the ATPase A chain family. In terms of assembly, F-type ATPases have 2 components, CF(1) - the catalytic core - and CF(0) - the membrane proton channel. CF(1) has five subunits: alpha(3), beta(3), gamma(1), delta(1), epsilon(1). CF(0) has three main subunits: a, b and c.

Its subcellular location is the mitochondrion inner membrane. In terms of biological role, mitochondrial membrane ATP synthase (F(1)F(0) ATP synthase or Complex V) produces ATP from ADP in the presence of a proton gradient across the membrane which is generated by electron transport complexes of the respiratory chain. F-type ATPases consist of two structural domains, F(1) - containing the extramembraneous catalytic core and F(0) - containing the membrane proton channel, linked together by a central stalk and a peripheral stalk. During catalysis, ATP synthesis in the catalytic domain of F(1) is coupled via a rotary mechanism of the central stalk subunits to proton translocation. Key component of the proton channel; it may play a direct role in the translocation of protons across the membrane. This chain is ATP synthase subunit a (ATP6), found in Ascaris suum (Pig roundworm).